Reading from the N-terminus, the 101-residue chain is Protamine-3 (101 aa).

Positions 1–101 (MGSRCAKLST…PSPEPKQTHS (101 aa)) are disordered. Acidic residues predominate over residues 45–67 (EGEEEEEDEEEEEEEEEEEEEEQ). Ser93 bears the Phosphoserine mark.

It belongs to the protamine P3 family. As to expression, testis.

It localises to the nucleus. It is found in the chromosome. Its function is as follows. Protamines substitute for histones in the chromatin of sperm during the haploid phase of spermatogenesis. They compact sperm DNA into a highly condensed, stable and inactive complex. The chain is Protamine-3 (Prm3) from Mus musculus (Mouse).